The primary structure comprises 421 residues: CinA-like protein (421 aa).

This sequence belongs to the CinA family.

In Myxococcus xanthus (strain DK1622), this protein is CinA-like protein.